Reading from the N-terminus, the 126-residue chain is Large ribosomal subunit protein bL12 (126 aa).

The protein belongs to the bacterial ribosomal protein bL12 family. Homodimer. Part of the ribosomal stalk of the 50S ribosomal subunit. Forms a multimeric L10(L12)X complex, where L10 forms an elongated spine to which 2 to 4 L12 dimers bind in a sequential fashion. Binds GTP-bound translation factors.

Forms part of the ribosomal stalk which helps the ribosome interact with GTP-bound translation factors. Is thus essential for accurate translation. This chain is Large ribosomal subunit protein bL12, found in Geobacter sp. (strain M21).